A 116-amino-acid chain; its full sequence is Large ribosomal subunit protein bL17 (116 aa).

Belongs to the bacterial ribosomal protein bL17 family. Part of the 50S ribosomal subunit. Contacts protein L32.

This Helicobacter pylori (strain G27) protein is Large ribosomal subunit protein bL17.